A 274-amino-acid chain; its full sequence is Large ribosomal subunit protein uL2c (274 aa).

2 disordered regions span residues 1-22 (MAIHLYKTSTPSTRNGAVDSQV) and 225-254 (PVDHPHGGGEGRAPIGRKKPVTPWGYPALG).

It belongs to the universal ribosomal protein uL2 family. Part of the 50S ribosomal subunit.

The protein localises to the plastid. Its subcellular location is the chloroplast. This is Large ribosomal subunit protein uL2c (rpl2) from Sinapis alba (White mustard).